The following is a 577-amino-acid chain: DNA-directed RNA polymerase subunit alpha (577 aa).

An alpha N-terminal domain (alpha-NTD) region spans residues 1-461; that stretch reads MIKIIIKETF…QLFLPLQQIR (461 aa). The tract at residues 510–577 is alpha C-terminal domain (alpha-CTD); that stretch reads FDHRLLELDI…ALQLMKLTLK (68 aa).

Belongs to the RNA polymerase alpha chain family. In plastids the minimal PEP RNA polymerase catalytic core is composed of four subunits: alpha, beta, beta', and beta''. When a (nuclear-encoded) sigma factor is associated with the core the holoenzyme is formed, which can initiate transcription.

It localises to the plastid. The protein resides in the chloroplast. It catalyses the reaction RNA(n) + a ribonucleoside 5'-triphosphate = RNA(n+1) + diphosphate. In terms of biological role, DNA-dependent RNA polymerase catalyzes the transcription of DNA into RNA using the four ribonucleoside triphosphates as substrates. The sequence is that of DNA-directed RNA polymerase subunit alpha from Tupiella akineta (Green alga).